The chain runs to 322 residues: Acetyl-coenzyme A carboxylase carboxyl transferase subunit beta (322 aa).

Residues 24 to 293 (LWIKCPDTGQ…PAVEEPAVVD (270 aa)) form the CoA carboxyltransferase N-terminal domain.

It belongs to the AccD/PCCB family. As to quaternary structure, acetyl-CoA carboxylase is a heterohexamer composed of biotin carboxyl carrier protein (AccB), biotin carboxylase (AccC) and two subunits each of ACCase subunit alpha (AccA) and ACCase subunit beta (AccD).

The protein localises to the cytoplasm. It carries out the reaction N(6)-carboxybiotinyl-L-lysyl-[protein] + acetyl-CoA = N(6)-biotinyl-L-lysyl-[protein] + malonyl-CoA. Its pathway is lipid metabolism; malonyl-CoA biosynthesis; malonyl-CoA from acetyl-CoA: step 1/1. Functionally, component of the acetyl coenzyme A carboxylase (ACC) complex. Biotin carboxylase (BC) catalyzes the carboxylation of biotin on its carrier protein (BCCP) and then the CO(2) group is transferred by the transcarboxylase to acetyl-CoA to form malonyl-CoA. The chain is Acetyl-coenzyme A carboxylase carboxyl transferase subunit beta from Rhodopseudomonas palustris (strain HaA2).